The primary structure comprises 259 residues: Thiazole synthase (259 aa).

The active-site Schiff-base intermediate with DXP is Lys98. 1-deoxy-D-xylulose 5-phosphate is bound by residues Gly159, 185-186, and 207-208; these read AG and NS.

It belongs to the ThiG family. Homotetramer. Forms heterodimers with either ThiH or ThiS.

It is found in the cytoplasm. It catalyses the reaction [ThiS sulfur-carrier protein]-C-terminal-Gly-aminoethanethioate + 2-iminoacetate + 1-deoxy-D-xylulose 5-phosphate = [ThiS sulfur-carrier protein]-C-terminal Gly-Gly + 2-[(2R,5Z)-2-carboxy-4-methylthiazol-5(2H)-ylidene]ethyl phosphate + 2 H2O + H(+). It functions in the pathway cofactor biosynthesis; thiamine diphosphate biosynthesis. Its function is as follows. Catalyzes the rearrangement of 1-deoxy-D-xylulose 5-phosphate (DXP) to produce the thiazole phosphate moiety of thiamine. Sulfur is provided by the thiocarboxylate moiety of the carrier protein ThiS. In vitro, sulfur can be provided by H(2)S. This chain is Thiazole synthase, found in Chlorobaculum tepidum (strain ATCC 49652 / DSM 12025 / NBRC 103806 / TLS) (Chlorobium tepidum).